A 176-amino-acid chain; its full sequence is Ferritin, liver middle subunit (176 aa).

One can recognise a Ferritin-like diiron domain in the interval 7 to 156 (QNYHRDCEAA…DFITNLSRMD (150 aa)). 5 residues coordinate Fe cation: Glu24, Glu59, His62, Glu104, and Gln138.

Belongs to the ferritin family. As to quaternary structure, in liver, forms a heteromer consisting of middle and heavy subunits. The functional molecule forms a roughly spherical shell with a diameter of 12 nm and contains a central cavity into which the insoluble mineral iron core is deposited. In terms of tissue distribution, liver (at protein level).

It catalyses the reaction 4 Fe(2+) + O2 + 4 H(+) = 4 Fe(3+) + 2 H2O. Functionally, stores iron in a soluble, non-toxic, readily available form. Important for iron homeostasis. Has ferroxidase activity. Iron is taken up in the ferrous form and deposited as ferric hydroxides after oxidation. The polypeptide is Ferritin, liver middle subunit (Trematomus bernacchii (Emerald rockcod)).